The sequence spans 548 residues: Zinc metalloproteinase dpy-31 (548 aa).

Residues 1–24 (MSLLRSASLLLVVVTAALPPCTLG) form the signal peptide. The propeptide occupies 25–150 (YSLHDGSRLD…KTGQRRVKRK (126 aa)). One can recognise a Peptidase M12A domain in the interval 150 to 349 (KFIGSDLRRW…IRLMNKIYCS (200 aa)). Asn190 is a glycosylation site (N-linked (GlcNAc...) asparagine). 5 cysteine pairs are disulfide-bonded: Cys193–Cys348, Cys216–Cys237, Cys352–Cys372, Cys374–Cys383, and Cys394–Cys422. His245 serves as a coordination point for Zn(2+). Glu246 is a catalytic residue. Positions 249 and 255 each coordinate Zn(2+). Residues 344 to 384 (NKIYCSNVCSRKLPCQRGGYTDPRRCDRCRCPDGFTGQFCE) form the EGF-like domain. Residues 394 to 510 (CGGRIQVNSG…RGFEARARAL (117 aa)) form the CUB domain. N-linked (GlcNAc...) asparagine glycosylation is present at Asn461. In terms of domain architecture, TSP type-1 spans 513 to 547 (NGQWASWTPWTPCTASCGACGSRMRTRVCPHGACP). Cystine bridges form between Cys525/Cys546, Cys529/Cys546, and Cys541/Cys546.

Requires Zn(2+) as cofactor.

Its subcellular location is the secreted. Functionally, metalloprotease which cleaves the carboxyl terminus of procollagens to mature collagens. Probably involved in cuticular collagen maturation. This Haemonchus contortus (Barber pole worm) protein is Zinc metalloproteinase dpy-31.